Consider the following 251-residue polypeptide: Triosephosphate isomerase (251 aa).

Residue 9-11 coordinates substrate; the sequence is NWK. His-95 (electrophile) is an active-site residue. The Proton acceptor role is filled by Glu-167. Residues Gly-173, Ser-212, and 233-234 each bind substrate; that span reads GG.

The protein belongs to the triosephosphate isomerase family. Homodimer.

It localises to the cytoplasm. The enzyme catalyses D-glyceraldehyde 3-phosphate = dihydroxyacetone phosphate. It functions in the pathway carbohydrate biosynthesis; gluconeogenesis. The protein operates within carbohydrate degradation; glycolysis; D-glyceraldehyde 3-phosphate from glycerone phosphate: step 1/1. In terms of biological role, involved in the gluconeogenesis. Catalyzes stereospecifically the conversion of dihydroxyacetone phosphate (DHAP) to D-glyceraldehyde-3-phosphate (G3P). The polypeptide is Triosephosphate isomerase (Ectopseudomonas mendocina (strain ymp) (Pseudomonas mendocina)).